We begin with the raw amino-acid sequence, 1940 residues long: MSSDTEMEVFGIAAPFLRKSEKERIEAQNQPFDAKTYCFVVDSKEEYAKGKIKSSQDGKVTVETEDNRTLVVKPEDVYAMNPPKFDKIEDMAMLTHLNEPAVLYNLKDRYTSWMIYTYSGLFCVTVNPYKWLPVYTPEVVDGYRGKKRQEAPPHIFSISDNAYQFMLTDRENQSILITGESGAGKTVNTKRVIQYFATIAATGDLAKKKDSKMKGTLEDQIISANPLLEAFGNAKTVRNDNSSRFGKFIRIHFGTTGKLASADIETYLLEKSRVTFQLKAERSYHIFYQILSNKKPELIELLLITTNPYDYPFISQGEILVASIDDREELLATDSAIDILGFTPEEKSGLYKLTGAVMHYGNMKFKQKQREEQAEPDGTEVADKTAYLMGLNSSDLLKALCFPRVKVGNEYVTKGQTVDQVHHAVNALSKSVYEKLFLWMVTRINQQLDTKLPRQHFIGVLDIAGFEIFEYNSLEQLCINFTNEKLQQFFNHHMFVLEQEEYKKEGIEWTFIDFGMDLAACIELIEKPMGIFSILEEECMFPKATDTSFKNKLYDQHLGKSNNFQKPKVVKGKAEAHFSLIHYAGTVDYSVSGWLEKNKDPLNETVVGLYQKSSNRLLAHLYATFATTDADGGKKKVAKKKGSSFQTVSALFRENLNKLMSNLRTTHPHFVRCIIPNETKTPGAMEHSLVLHQLRCNGVLEGIRICRKGFPNRILYGDFKQRYRVLNASAIPEGQFIDSKKACEKLLASIDIDHTQYKFGHTKVFFKAGLLGTLEEMRDERLAKLITRTQAVCRGFLMRVEFQKMMQRRESIFCIQYNIRAFMNVKHWPWMKLFFKIKPLLKSAETEKEMATMKEEFQKTKDELAKSEAKRKELEEKLVTLVQEKNDLQLQVQAESENLLDAEERCDQLIKAKFQLEAKIKEVTERAEDEEEINAELTAKKRKLEDECSELKKDIDDLELTLAKVEKEKHATENKVKNLTEELAGLDETIAKLTREKKALQEAHQQTLDDLQAEEDKVNSLSKLKSKLEQQVDDLESSLEQEKKLRVDLERNKRKLEGDLKLAQESILDLENDKQQLDERLKKKDFEYSQLQSKVEDEQTLSLQLQKKIKELQARIEELEEEIEAERATRAKTEKQRSDYARELEELSERLEEAGGVTSTQIELNKKREAEFLKLRRDLEEATLQHEATVATLRKKHADSAAELAEQIDNLQRVKQKLEKEKSEFKLEIDDLSSSVESVSKSKANLEKICRTLEDQLSEARGKNEETQRSLSELTTQKSRLQTEAGELSRQLEEKESIVSQLSRSKQAFTQQIEELKRQLEEENKAKNALAHALQSSRHDCDLLREQYEEEQEGKAELQRALSKANSEVAQWRTKYETDAIQRTEELEEAKKKLAQRLQDSEEQVEAVNAKCASLEKTKQRLQGEVEDLMVDVERANSLAAALDKKQRNFDKVLAEWKTKCEESQAELEAALKESRSLSTELFKLKNAYEEALDQLETVKRENKNLEQEIADLTEQIAENGKSIHELEKSRKQMELEKADIQMALEEAEAALEHEEAKILRIQLELTQVKSEIDRKIAEKDEEIEQLKRNYQRTVETMQGALDAEVRSRNEAIRLKKKMEGDLNEIEIQLSHANRQAAETIKHLRSVQGQLKDTQLHLDDALRGQEDLKEQLAIVERRANLLQAEVEELRATLEQTERARKLAEQELLDSNERVQLLHTQNTSLIHTKKKLETDLTQLQSEVEDASRDARNAEEKAKKAITDAAMMAEELKKEQDTSAHLERMKKNLEQTVKDLQHRLDEAEQLALKGGKKQIQKLETRIRELEFELEGEQKRNTESVKGLRKYERRVKELTYQSEEDRKNVLRLQDLVDKLQVKVKSYKRQAEEADEQANVHLTKFRKAQHELEEAEERADIAESQVNKLRAKTRDFTSSRMVVHESEE.

A Myosin N-terminal SH3-like domain is found at 33–82; that stretch reads DAKTYCFVVDSKEEYAKGKIKSSQDGKVTVETEDNRTLVVKPEDVYAMNP. Positions 86–779 constitute a Myosin motor domain; sequence DKIEDMAMLT…LLGTLEEMRD (694 aa). At lysine 130 the chain carries N6,N6,N6-trimethyllysine. 179–186 serves as a coordination point for ATP; that stretch reads GESGAGKT. Actin-binding stretches follow at residues 656 to 678 and 758 to 772; these read LNKL…IPNE and KFGH…GLLG. The IQ domain maps to 782-811; it reads LAKLITRTQAVCRGFLMRVEFQKMMQRRES. A coiled-coil region spans residues 840–1933; that stretch reads LLKSAETEKE…KTRDFTSSRM (1094 aa). Positions 1260–1289 are disordered; it reads ARGKNEETQRSLSELTTQKSRLQTEAGELS. The segment covering 1269–1282 has biased composition (polar residues); the sequence is RSLSELTTQKSRLQ.

Belongs to the TRAFAC class myosin-kinesin ATPase superfamily. Myosin family. As to quaternary structure, muscle myosin is a hexameric protein that consists of 2 heavy chain subunits (MHC), 2 alkali light chain subunits (MLC) and 2 regulatory light chain subunits (MLC-2).

The protein resides in the cytoplasm. Its subcellular location is the myofibril. Muscle contraction. The protein is Myosin-3 (Myh3) of Rattus norvegicus (Rat).